Here is a 288-residue protein sequence, read N- to C-terminus: Ankyrin repeat and SOCS box protein 8 (288 aa).

A Phosphoserine modification is found at Ser-17. ANK repeat units lie at residues 52–81 (GTLK…EVNA), 85–113 (YNRT…NPNA), 117–146 (NRDT…SVNA), and 150–179 (NNDT…EVRV). Residues 235–288 (QLCEKLTVLCSAPGTLKTLARYAVRRSLGLQYLPDAVKGLPLPASLKEYLLLLE) form the SOCS box domain.

The protein belongs to the ankyrin SOCS box (ASB) family. In terms of assembly, interacts with TBK1; this interaction promotes TBK1 proteasomal degradation. In terms of processing, phosphorylated by TBK1. In terms of tissue distribution, highest level of expression in skeletal muscle. Also expressed in heart, brain, placenta, liver, kidney and pancreas.

The protein localises to the cytoplasm. It participates in protein modification; protein ubiquitination. Functionally, may be a substrate-recognition component of a SCF-like ECS (Elongin-Cullin-SOCS-box protein) E3 ubiquitin-protein ligase complex which mediates the ubiquitination and subsequent proteasomal degradation of target proteins. Inhibits IFN-beta production through the IRF3 signaling pathway by targeting TBK1 via 'Lys-48'-linked ubiquitination, leading to its proteasomal degradation. The sequence is that of Ankyrin repeat and SOCS box protein 8 (ASB8) from Homo sapiens (Human).